The following is a 273-amino-acid chain: NH(3)-dependent NAD(+) synthetase (273 aa).

Residue 47–54 (GISGGQDS) coordinates ATP. Asp53 contributes to the Mg(2+) binding site. Arg139 contacts deamido-NAD(+). Position 159 (Thr159) interacts with ATP. Glu164 contributes to the Mg(2+) binding site. Positions 172 and 179 each coordinate deamido-NAD(+). ATP-binding residues include Lys188 and Thr210. Position 259 to 260 (259 to 260 (HK)) interacts with deamido-NAD(+).

The protein belongs to the NAD synthetase family. As to quaternary structure, homodimer.

It catalyses the reaction deamido-NAD(+) + NH4(+) + ATP = AMP + diphosphate + NAD(+) + H(+). The protein operates within cofactor biosynthesis; NAD(+) biosynthesis; NAD(+) from deamido-NAD(+) (ammonia route): step 1/1. Functionally, catalyzes the ATP-dependent amidation of deamido-NAD to form NAD. Uses ammonia as a nitrogen source. This is NH(3)-dependent NAD(+) synthetase from Staphylococcus aureus (strain COL).